The primary structure comprises 241 residues: Neuromodulin (241 aa).

The span at 1–26 (TKQVEKNEDGDQKIEQDGIKPEDKAH) shows a compositional bias: basic and acidic residues. The interval 1-241 (TKQVEKNEDG…EESKADQENA (241 aa)) is disordered. The 30-residue stretch at 25-54 (AHKAATKIQASFRGHITRKKLKGEKKGDAP) folds into the IQ domain. Composition is skewed to low complexity over residues 80–95 (APAA…AQQE) and 118–131 (SEQP…PAAS). 2 stretches are compositionally biased toward basic and acidic residues: residues 132–147 (SEEK…REST) and 159–171 (KADE…EPKQ). Low complexity predominate over residues 172 to 198 (ADVPAADTTATTTPAAEDATAKATAQP). 2 stretches are compositionally biased toward basic and acidic residues: residues 208 to 220 (TEEK…ETKP) and 232 to 241 (EESKADQENA).

It belongs to the neuromodulin family. As to quaternary structure, binds calmodulin with a greater affinity in the absence of Ca(2+) than in its presence. In terms of processing, palmitoylated. Palmitoylation is essential for plasma membrane association.

The protein localises to the cell membrane. It localises to the cell projection. The protein resides in the growth cone membrane. Its subcellular location is the synapse. It is found in the filopodium membrane. Functionally, this protein is associated with nerve growth. It is a major component of the motile 'growth cones' that form the tips of elongating axons. Plays a role in axonal and dendritic filopodia induction. The chain is Neuromodulin (GAP43) from Serinus canaria (Island canary).